The following is a 1960-amino-acid chain: Myosin-9 (1960 aa).

Ala2 carries the post-translational modification N-acetylalanine. A mediates interaction with LIMCH1 region spans residues 2–838 (AQQAADKYLY…RLFTKVKPLL (837 aa)). N6-acetyllysine is present on Lys8. Tyr11 is modified (phosphotyrosine). A Myosin N-terminal SH3-like domain is found at 27 to 77 (AAKKLVWVPSDKSGFEPASLKEEVGEEAIVELVENGKKVKVNKDDIQKMNP). The Myosin motor domain maps to 81–776 (SKVEDMAELT…VLAHLEEERD (696 aa)). The residue at position 102 (Lys102) is an N6-acetyllysine. 174–181 (GESGAGKT) serves as a coordination point for ATP. 3 positions are modified to N6-acetyllysine: Lys299, Lys435, and Lys613. At Ser628 the chain carries Phosphoserine. The segment at 654 to 676 (LAKLMATLRNTNPNFVRCIIPNH) is actin-binding. The residue at position 754 (Tyr754) is a Phosphotyrosine. An IQ domain is found at 779 to 808 (ITDVIIGFQACCRGYLARKAFAKRQQQLTA). A coiled-coil region spans residues 837-1926 (LLQVSRQEEE…LKNKLRRGDL (1090 aa)). N6-succinyllysine is present on Lys850. Residues Lys860, Lys975, and Lys1024 each carry the N6-acetyllysine modification. Residues 1035 to 1055 (RLRREEKQRQELEKTRRKLEG) are compositionally biased toward basic and acidic residues. A disordered region spans residues 1035–1057 (RLRREEKQRQELEKTRRKLEGDS). Phosphoserine is present on Ser1114. Positions 1118-1137 (EDLESERASRNKAEKQKRDL) are disordered. Positions 1122 to 1137 (SERASRNKAEKQKRDL) are enriched in basic and acidic residues. N6-acetyllysine is present on residues Lys1234, Lys1249, Lys1357, Lys1392, Lys1404, Lys1410, Lys1459, and Lys1638. An N6-succinyllysine modification is found at Lys1669. Position 1714 is a phosphoserine (Ser1714). Lys1793, Lys1802, and Lys1845 each carry N6-acetyllysine. Residues 1877–1960 (RQLEEAEEEA…ADGAEAKPAE (84 aa)) are disordered. At Arg1923 the chain carries Omega-N-methylarginine. Ser1943 is modified (phosphoserine). Residues 1948-1960 (DGKADGAEAKPAE) show a composition bias toward basic and acidic residues.

This sequence belongs to the TRAFAC class myosin-kinesin ATPase superfamily. Myosin family. In terms of assembly, myosin is a hexameric protein that consists of 2 heavy chain subunits (MHC), 2 alkali light chain subunits (MLC) and 2 regulatory light chain subunits (MLC-2). Interacts with RASIP1. Interacts with DDR1. Interacts with PDLIM2. Interacts with SVIL. Interacts with HTRA3. Interacts with Myo7a. Interacts with CFAP95. Interacts with LIMCH1; independently of the integration of MYH9 into the myosin complex. Interacts with RAB3A. Interacts with ZBED4. Interacts with S100A4; this interaction increases cell motility. As to quaternary structure, (Microbial infection) Interacts with herpes simplex virus 1/HHV-1 envelope glycoprotein B. ISGylated. In terms of processing, ubiquitination. In the kidney, expressed in the glomeruli. Also expressed in leukocytes.

It localises to the cytoplasm. Its subcellular location is the cytoskeleton. The protein resides in the cell cortex. It is found in the cytoplasmic vesicle. The protein localises to the secretory vesicle. It localises to the cortical granule. Its subcellular location is the cell membrane. Its function is as follows. Cellular myosin that appears to play a role in cytokinesis, cell shape, and specialized functions such as secretion and capping. Required for cortical actin clearance prior to oocyte exocytosis. Promotes cell motility in conjunction with S100A4. During cell spreading, plays an important role in cytoskeleton reorganization, focal contact formation (in the margins but not the central part of spreading cells), and lamellipodial retraction; this function is mechanically antagonized by MYH10. (Microbial infection) Acts as a receptor for herpes simplex virus 1/HHV-1 envelope glycoprotein B. This chain is Myosin-9 (MYH9), found in Homo sapiens (Human).